The following is a 148-amino-acid chain: Large ribosomal subunit protein uL15 (148 aa).

Residues 1-30 (MPSRLRKTRKLRGHVSHGHGRIGKHRKHPG) show a composition bias toward basic residues. The tract at residues 1–38 (MPSRLRKTRKLRGHVSHGHGRIGKHRKHPGGRGNAGGL) is disordered. A (3S)-3-hydroxyhistidine modification is found at histidine 39. Lysine 47 and lysine 55 each carry N6-acetyllysine. Phosphoserine is present on serine 68. Residue lysine 110 is modified to N6-acetyllysine.

Belongs to the universal ribosomal protein uL15 family. Post-translationally, hydroxylated on His-39 by MINA.

In Pan troglodytes (Chimpanzee), this protein is Large ribosomal subunit protein uL15 (RPL27A).